The following is a 258-amino-acid chain: DNA repair protein RecO (258 aa).

It belongs to the RecO family.

Functionally, involved in DNA repair and RecF pathway recombination. The polypeptide is DNA repair protein RecO (Desulfatibacillum aliphaticivorans).